The chain runs to 94 residues: Phosphoribosyl-ATP pyrophosphatase (94 aa).

This sequence belongs to the PRA-PH family.

Its subcellular location is the cytoplasm. The enzyme catalyses 1-(5-phospho-beta-D-ribosyl)-ATP + H2O = 1-(5-phospho-beta-D-ribosyl)-5'-AMP + diphosphate + H(+). The protein operates within amino-acid biosynthesis; L-histidine biosynthesis; L-histidine from 5-phospho-alpha-D-ribose 1-diphosphate: step 2/9. The chain is Phosphoribosyl-ATP pyrophosphatase (hisE) from Sulfurisphaera tokodaii (strain DSM 16993 / JCM 10545 / NBRC 100140 / 7) (Sulfolobus tokodaii).